Consider the following 91-residue polypeptide: Sec-independent protein translocase protein TatA (91 aa).

The chain crosses the membrane as a helical span at residues 1–21 (MGSMSVWHWVIVAVVVMLLFG). Residues 42–91 (GMADDETQPTNTTSVPPVGPNDPVRTLPHQGAPGTAPQQTHVPAGDHKAV) form a disordered region.

Belongs to the TatA/E family. The Tat system comprises two distinct complexes: a TatABC complex, containing multiple copies of TatA, TatB and TatC subunits, and a separate TatA complex, containing only TatA subunits. Substrates initially bind to the TatABC complex, which probably triggers association of the separate TatA complex to form the active translocon.

The protein localises to the cell inner membrane. In terms of biological role, part of the twin-arginine translocation (Tat) system that transports large folded proteins containing a characteristic twin-arginine motif in their signal peptide across membranes. TatA could form the protein-conducting channel of the Tat system. In Methylorubrum populi (strain ATCC BAA-705 / NCIMB 13946 / BJ001) (Methylobacterium populi), this protein is Sec-independent protein translocase protein TatA.